The following is a 58-amino-acid chain: Potassium channel toxin alpha-KTx 1.6 (58 aa).

Residues 1–21 (MKISFLLLLAIVICSIGWTEA) form the signal peptide. At Gln22 the chain carries Pyrrolidone carboxylic acid. Cystine bridges form between Cys28/Cys49, Cys34/Cys54, and Cys38/Cys56.

Belongs to the short scorpion toxin superfamily. Potassium channel inhibitor family. Alpha-KTx 01 subfamily. Expressed by the venom gland.

It is found in the secreted. Functionally, potent blocker of both large-conductance calcium-activated potassium channels (KCa1.1/KCNMA1) and voltage-gated potassium channels (Kv1.3/KCNA3 and ERG1/Kv11.1/KCNH2). The chain is Potassium channel toxin alpha-KTx 1.6 from Olivierus martensii (Manchurian scorpion).